Here is a 678-residue protein sequence, read N- to C-terminus: Probable N-methylproline demethylase (678 aa).

FMN-binding positions include Gly-59, Gln-102, Arg-220, Lys-299, and 321-322 (TR). [4Fe-4S] cluster-binding residues include Cys-345, Cys-351, and Cys-363. FAD contacts are provided by Ala-396, Glu-415, Gln-423, Arg-433, and Ala-460.

It in the N-terminal section; belongs to the NADH:flavin oxidoreductase/NADH oxidase family. FMN is required as a cofactor. Requires FAD as cofactor. [4Fe-4S] cluster serves as cofactor.

It carries out the reaction N-methyl-L-proline + NAD(+) + H2O = L-proline + formaldehyde + NADH + H(+). Its pathway is amine and polyamine degradation; stachydrine degradation. Possible NADH-dependent oxidase, may function as a demethylase that converts N-methylproline to proline. The chain is Probable N-methylproline demethylase from Rhizobium meliloti (strain 1021) (Ensifer meliloti).